Reading from the N-terminus, the 169-residue chain is ATP synthase subunit b (169 aa).

A helical transmembrane segment spans residues 11–31 (IPSFIAQIVNFGLLLGLLYLF).

It belongs to the ATPase B chain family. In terms of assembly, F-type ATPases have 2 components, F(1) - the catalytic core - and F(0) - the membrane proton channel. F(1) has five subunits: alpha(3), beta(3), gamma(1), delta(1), epsilon(1). F(0) has three main subunits: a(1), b(2) and c(10-14). The alpha and beta chains form an alternating ring which encloses part of the gamma chain. F(1) is attached to F(0) by a central stalk formed by the gamma and epsilon chains, while a peripheral stalk is formed by the delta and b chains.

The protein resides in the cell membrane. Functionally, f(1)F(0) ATP synthase produces ATP from ADP in the presence of a proton or sodium gradient. F-type ATPases consist of two structural domains, F(1) containing the extramembraneous catalytic core and F(0) containing the membrane proton channel, linked together by a central stalk and a peripheral stalk. During catalysis, ATP synthesis in the catalytic domain of F(1) is coupled via a rotary mechanism of the central stalk subunits to proton translocation. Its function is as follows. Component of the F(0) channel, it forms part of the peripheral stalk, linking F(1) to F(0). The polypeptide is ATP synthase subunit b (Dehalococcoides mccartyi (strain ATCC BAA-2100 / JCM 16839 / KCTC 5957 / BAV1)).